The primary structure comprises 495 residues: Trimethylamine methyltransferase MttB1 (495 aa).

A non-standard amino acid (pyrrolysine) is located at residue O334.

This sequence belongs to the trimethylamine methyltransferase family. As to quaternary structure, can form a complex with MttC.

It carries out the reaction Co(I)-[trimethylamine-specific corrinoid protein] + trimethylamine + H(+) = methyl-Co(III)-[trimethylamine-specific corrinoid protein] + dimethylamine. It participates in one-carbon metabolism; methanogenesis from trimethylamine. In terms of biological role, catalyzes the transfer of a methyl group from trimethylamine to the corrinoid cofactor of MttC. In Methanosarcina acetivorans (strain ATCC 35395 / DSM 2834 / JCM 12185 / C2A), this protein is Trimethylamine methyltransferase MttB1 (mttB1).